The chain runs to 111 residues: U-scoloptoxin(16)-Er8a (111 aa).

The signal sequence occupies residues Met1–Gly26.

It belongs to the scoloptoxin-16 family. Post-translationally, contains 4 disulfide bonds. In terms of tissue distribution, expressed by the venom gland.

It is found in the secreted. The sequence is that of U-scoloptoxin(16)-Er8a from Ethmostigmus rubripes (Giant centipede).